A 262-amino-acid polypeptide reads, in one-letter code: 5'-nucleotidase SurE (262 aa).

The a divalent metal cation site is built by Asp8, Asp9, Ser40, and Asn92.

It belongs to the SurE nucleotidase family. A divalent metal cation is required as a cofactor.

It is found in the cytoplasm. It carries out the reaction a ribonucleoside 5'-phosphate + H2O = a ribonucleoside + phosphate. In terms of biological role, nucleotidase that shows phosphatase activity on nucleoside 5'-monophosphates. The protein is 5'-nucleotidase SurE of Xylella fastidiosa (strain 9a5c).